A 170-amino-acid polypeptide reads, in one-letter code: Adenine phosphoribosyltransferase (170 aa).

The protein belongs to the purine/pyrimidine phosphoribosyltransferase family. Homodimer.

It is found in the cytoplasm. The catalysed reaction is AMP + diphosphate = 5-phospho-alpha-D-ribose 1-diphosphate + adenine. The protein operates within purine metabolism; AMP biosynthesis via salvage pathway; AMP from adenine: step 1/1. Its function is as follows. Catalyzes a salvage reaction resulting in the formation of AMP, that is energically less costly than de novo synthesis. This Nitrosopumilus maritimus (strain SCM1) protein is Adenine phosphoribosyltransferase.